The primary structure comprises 611 residues: Protein Spindly (611 aa).

Residues 1–288 (MEESETVLKL…QFQSLQKQHA (288 aa)) adopt a coiled-coil conformation. Over residues 499 to 511 (LKEDSSLSTKEQD) the composition is skewed to basic and acidic residues. Residues 499-611 (LKEDSSLSTK…PAATTQCPQQ (113 aa)) form a disordered region. Over residues 549-567 (RNTNNCSVTSTSPRSASEE) the composition is skewed to polar residues. A compositionally biased stretch (basic and acidic residues) spans 570–583 (SESKRFDEEQEKRK).

Belongs to the Spindly family.

It localises to the chromosome. It is found in the centromere. Its subcellular location is the kinetochore. Functionally, required for the localization of dynein and dynactin to the mitotic kintochore. Dynein is believed to control the initial lateral interaction between the kinetochore and spindle microtubules and to facilitate the subsequent formation of end-on kinetochore-microtubule attachments mediated by the NDC80 complex. May act as an adapter protein linking the dynein motor complex to various cargos. This chain is Protein Spindly (spdl1), found in Xenopus tropicalis (Western clawed frog).